A 467-amino-acid chain; its full sequence is Cytochrome c-552 (467 aa).

The N-terminal stretch at 1 to 27 (MMKKMTGKSFALSALVAASFMAAGAMA) is a signal peptide. Heme c is bound at residue His-87. Cys-115, Cys-118, and Lys-119 together coordinate heme. The heme c site is built by Cys-153, Cys-156, His-157, Cys-195, Cys-198, and His-199. Positions 201, 202, 250, and 252 each coordinate Ca(2+). Tyr-202 provides a ligand contact to substrate. Substrate is bound at residue His-253. His-264, Cys-271, Cys-274, His-275, His-290, Cys-303, Cys-306, His-307, and His-382 together coordinate heme c.

Belongs to the cytochrome c-552 family. Requires Ca(2+) as cofactor. Heme c serves as cofactor.

It is found in the periplasm. The enzyme catalyses 6 Fe(III)-[cytochrome c] + NH4(+) + 2 H2O = 6 Fe(II)-[cytochrome c] + nitrite + 8 H(+). It participates in nitrogen metabolism; nitrate reduction (assimilation). Catalyzes the reduction of nitrite to ammonia, consuming six electrons in the process. This is Cytochrome c-552 from Shewanella sp. (strain W3-18-1).